The primary structure comprises 972 residues: 116 kDa U5 small nuclear ribonucleoprotein component (972 aa).

An N-acetylmethionine modification is found at Met1. Residues 1-54 (MDTDLYDEFGNYIGPELDSDEDDDELGRETKDLDEMDDDDDDDDVGDHDDDHPG) form a disordered region. Composition is skewed to acidic residues over residues 17–26 (LDSDEDDDEL) and 34–48 (DEMDDDDDDDDVGDH). Ser19 carries the post-translational modification Phosphoserine. Residue Lys64 forms a Glycyl lysine isopeptide (Lys-Gly) (interchain with G-Cter in SUMO1); alternate linkage. Lys64 is covalently cross-linked (Glycyl lysine isopeptide (Lys-Gly) (interchain with G-Cter in SUMO2); alternate). Position 86 is a phosphothreonine (Thr86). Residues 127 to 409 (ELIRNVTLCG…GIHLTKEELK (283 aa)) form the tr-type G domain. GTP is bound by residues 136-143 (GHLHHGKT), 204-208 (DTPGH), and 258-261 (NKID).

It belongs to the TRAFAC class translation factor GTPase superfamily. Classic translation factor GTPase family. EF-G/EF-2 subfamily. Component of the U5 snRNP and the U4/U6-U5 tri-snRNP complex, a building block of the spliceosome. The U4/U6-U5 tri-snRNP complex is composed of the U4, U6 and U5 snRNAs and at least PRPF3, PRPF4, PRPF6, PRPF8, PRPF31, SNRNP200, TXNL4A, SNRNP40, DDX23, CD2BP2, PPIH, SNU13, EFTUD2, SART1 and USP39. Component of the pre-catalytic, catalytic and post-catalytic spliceosome complexes. Component of the minor spliceosome, which splices U12-type introns. Within this complex, interacts with CRIPT. Interacts with ERBB4 and PRPF8. Interacts with PIH1D1. Interacts with RPAP3 and URI1 in a ZNHIT2-dependent manner. Interacts with NRDE2. Interacts with FAM50A. Interacts with UBL5.

It localises to the nucleus. Required for pre-mRNA splicing as component of the spliceosome, including pre-catalytic, catalytic and post-catalytic spliceosomal complexes. Component of the U5 snRNP and the U4/U6-U5 tri-snRNP complex, a building block of the spliceosome. As a component of the minor spliceosome, involved in the splicing of U12-type introns in pre-mRNAs. The chain is 116 kDa U5 small nuclear ribonucleoprotein component (EFTUD2) from Homo sapiens (Human).